Consider the following 309-residue polypeptide: Homoserine O-succinyltransferase (309 aa).

Cys-142 acts as the Acyl-thioester intermediate in catalysis. Substrate is bound by residues Lys-163 and Ser-192. The Proton acceptor role is filled by His-235. The active site involves Glu-237. Substrate is bound at residue Arg-249.

Belongs to the MetA family. As to quaternary structure, homodimer.

It localises to the cytoplasm. It catalyses the reaction L-homoserine + succinyl-CoA = O-succinyl-L-homoserine + CoA. It participates in amino-acid biosynthesis; L-methionine biosynthesis via de novo pathway; O-succinyl-L-homoserine from L-homoserine: step 1/1. Functionally, transfers a succinyl group from succinyl-CoA to L-homoserine, forming succinyl-L-homoserine. The chain is Homoserine O-succinyltransferase from Salmonella arizonae (strain ATCC BAA-731 / CDC346-86 / RSK2980).